The sequence spans 359 residues: Pyruvate dehydrogenase E1 component subunit beta, mitochondrial (359 aa).

Residues 1–30 (MAAVSGLVRRPLREVSGLLKRRFHWTAPAA) constitute a mitochondrion transit peptide. Phosphotyrosine is present on Y67. E89 contributes to the thiamine diphosphate binding site. 5 residues coordinate K(+): I142, A190, I191, D193, and N195. An N6-acetyllysine modification is found at K354.

As to quaternary structure, heterotetramer of two PDHA1 and two PDHB subunits. The heterotetramer interacts with DLAT, and is part of the multimeric pyruvate dehydrogenase complex that contains multiple copies of pyruvate dehydrogenase (E1), dihydrolipoamide acetyltransferase (DLAT, E2) and lipoamide dehydrogenase (DLD, E3). These subunits are bound to an inner core composed of about 48 DLAT and 12 PDHX molecules. Interacts with DLAT. Thiamine diphosphate serves as cofactor.

It localises to the mitochondrion matrix. The enzyme catalyses N(6)-[(R)-lipoyl]-L-lysyl-[protein] + pyruvate + H(+) = N(6)-[(R)-S(8)-acetyldihydrolipoyl]-L-lysyl-[protein] + CO2. The pyruvate dehydrogenase complex catalyzes the overall conversion of pyruvate to acetyl-CoA and CO(2), and thereby links the glycolytic pathway to the tricarboxylic cycle. The chain is Pyruvate dehydrogenase E1 component subunit beta, mitochondrial (PDHB) from Homo sapiens (Human).